The primary structure comprises 175 residues: Protein LAZY 3 (175 aa).

Residues 9–39 are disordered; the sequence is RKLSGKKRVPTSDSSQEPSSPPLSKEVQGLP. Positions 44–50 match the IGT motif motif; it reads TFLAIGT.

It belongs to the LAZY family. Specifically expressed in roots. Expressed in root tips of young seedlings.

Its function is as follows. Involved in the regulation of root gravitropism. Functions redundantly with LAZY2 and LAZY4 in the control of root gravitropism. Functions redundantly with LAZY1, LAZY2 and LAZY4 to control plant architecture by coupling gravity sensing to the formation of auxin gradients. This chain is Protein LAZY 3, found in Arabidopsis thaliana (Mouse-ear cress).